We begin with the raw amino-acid sequence, 288 residues long: Elongation factor Ts (288 aa).

The interval 79 to 82 (TDFV) is involved in Mg(2+) ion dislocation from EF-Tu.

This sequence belongs to the EF-Ts family.

The protein localises to the cytoplasm. Its function is as follows. Associates with the EF-Tu.GDP complex and induces the exchange of GDP to GTP. It remains bound to the aminoacyl-tRNA.EF-Tu.GTP complex up to the GTP hydrolysis stage on the ribosome. The polypeptide is Elongation factor Ts (Ehrlichia ruminantium (strain Gardel)).